Reading from the N-terminus, the 532-residue chain is Putative cysteine ligase BshC (532 aa).

The stretch at 431 to 451 (MAQAKDALAKVDASLVEAAER) forms a coiled coil.

This sequence belongs to the BshC family.

The protein is Putative cysteine ligase BshC of Koribacter versatilis (strain Ellin345).